Reading from the N-terminus, the 649-residue chain is Transcription factor E2-alpha (649 aa).

Disordered regions lie at residues 37–107 (RPAS…SERN), 132–207 (GLSS…AKTP), 296–325 (TYSG…SSSG), and 339–376 (DHSS…ALSP). Polar residues predominate over residues 57-71 (SESWGNSEQNSSSFD). Residues 132–148 (GLSSPGPLSPSGVKSSS) are compositionally biased toward low complexity. Phosphoserine occurs at positions 135 and 140. Residues 171-177 (PKKVRKV) carry the Nuclear localization signal motif. Low complexity predominate over residues 339-352 (DHSSNNFSPSPSTP). At Thr351 the chain carries Phosphothreonine. At Ser355 the chain carries Phosphoserine. At Arg367 the chain carries Omega-N-methylarginine. Position 375 is a phosphoserine (Ser375). The interval 385-420 (LSKMEDRLDEAIHVLRSHAVGTASELHGLLPGHSTL) is leucine-zipper. Residues 435 to 547 (AGLVSGSHPE…KAEREKERRV (113 aa)) form a disordered region. Residues 459–477 (SLPSQPSSLPDLSQRPPDS) show a composition bias toward low complexity. Residue Lys494 forms a Glycyl lysine isopeptide (Lys-Gly) (interchain with G-Cter in SUMO2) linkage. A Phosphoserine modification is found at Ser524. The residue at position 526 (Asp526) is a Phosphothreonine. Residues 537 to 547 (QKAEREKERRV) are compositionally biased toward basic and acidic residues. Residues 544 to 597 (ERRVANNARERLRVRDINEAFKELGRMCQLHLSTEKPQTKLLILHQAVAVILSL) form the bHLH domain. Residue Lys620 forms a Glycyl lysine isopeptide (Lys-Gly) (interchain with G-Cter in SUMO2) linkage.

As to quaternary structure, homodimer. Heterodimer; efficient DNA binding requires dimerization with another bHLH protein. Forms a heterodimer with TWIST1 and TWIST2. Forms a heterodimer with NEUROD1; the heterodimer is inhibited in presence of ID2, but not NR0B2, to E-box element. Forms a heterodimer with TCF15; the heterodimer binds E-box element. Forms a heterodimer with MYOG; heterodimerization enhances MYOG DNA-binding and transcriptional activities. Forms a heterodimer with ATOH8; repress transcription of TCF3 and TCF3-NEUROG3 dimer-induced transactivation of E box-dependent promoters. Component of a nuclear TAL-1 complex composed at least of CBFA2T3, LDB1, TAL1 and TCF3. Interacts with NEUROD2. Interacts with EP300. Interacts with PTF1A, TGFB1I1. Interacts with UBE2I. Interacts with BHLHA9. Interacts with ASB2; the interaction is mediated by SKP2 and targets TCF3 for Notch-induced proteasomal degradation. Interacts with transcription factor ASCL5/AmeloD. Interacts with RALGAPA1. Interacts with FIGLA. In terms of assembly, forms a heterodimer with ATOH7; required for ATOH7 DNA-binding. Phosphorylated following NGF stimulation. Post-translationally, undergoes Notch-induced ubiquitination and subsequent proteasomal degradation which is mediated by ASB1 or ASB2, the substrate-recognition components of probable ECS E3 ubiquitin-protein ligase complexes.

The protein localises to the nucleus. Functionally, transcriptional regulator involved in the initiation of neuronal differentiation and mesenchymal to epithelial transition. Heterodimers between TCF3 and tissue-specific basic helix-loop-helix (bHLH) proteins play major roles in determining tissue-specific cell fate during embryogenesis, like muscle or early B-cell differentiation. Together with TCF15, required for the mesenchymal to epithelial transition. Dimers bind DNA on E-box motifs: 5'-CANNTG-3'. Binds to the kappa-E2 site in the kappa immunoglobulin gene enhancer. Binds to the consensus sequence CAC/GCTGT/C present, in the chymotrypsin, insulin, AP-4, and several other gene enhancer motifs. In terms of biological role, facilitates ATOH7 binding to DNA at the consensus sequence 5'-CAGGTG-3', and positively regulates transcriptional activity. This chain is Transcription factor E2-alpha (Tcf3), found in Rattus norvegicus (Rat).